Consider the following 269-residue polypeptide: Phosphonoacetaldehyde hydrolase (269 aa).

The active-site Nucleophile is the Asp-10. Asp-10 and Ala-12 together coordinate Mg(2+). The active-site Schiff-base intermediate with substrate is Lys-52. Asp-186 contacts Mg(2+).

This sequence belongs to the HAD-like hydrolase superfamily. PhnX family. In terms of assembly, homodimer. The cofactor is Mg(2+).

It catalyses the reaction phosphonoacetaldehyde + H2O = acetaldehyde + phosphate + H(+). In terms of biological role, involved in phosphonate degradation. In Salmonella typhi, this protein is Phosphonoacetaldehyde hydrolase.